The sequence spans 175 residues: Bifunctional protein PyrR (175 aa).

Substrate is bound by residues 40 to 41 (TR), 102 to 110 (DDVLYTGRT), R135, and V159. A PRPP-binding motif is present at residues 98-110 (VIIIDDVLYTGRT).

It belongs to the purine/pyrimidine phosphoribosyltransferase family. PyrR subfamily. As to quaternary structure, homodimer and homohexamer; in equilibrium.

It catalyses the reaction UMP + diphosphate = 5-phospho-alpha-D-ribose 1-diphosphate + uracil. Regulates transcriptional attenuation of the pyrimidine nucleotide (pyr) operon by binding in a uridine-dependent manner to specific sites on pyr mRNA. This disrupts an antiterminator hairpin in the RNA and favors formation of a downstream transcription terminator, leading to a reduced expression of downstream genes. In terms of biological role, also displays a weak uracil phosphoribosyltransferase activity which is not physiologically significant. The polypeptide is Bifunctional protein PyrR (Staphylococcus aureus (strain MSSA476)).